A 371-amino-acid chain; its full sequence is Jasmonate-induced oxygenase 2 (371 aa).

One can recognise a Fe2OG dioxygenase domain in the interval 219–320 (NIGACLRVNY…RVSLAFFYNP (102 aa)). Arg225 contacts jasmonate. Residues Asn227 and Tyr229 each coordinate 2-oxoglutarate. Positions 244, 246, and 301 each coordinate Fe cation. Arg311 and Ser313 together coordinate 2-oxoglutarate. Residues Arg350 and Arg354 each contribute to the jasmonate site.

It belongs to the iron/ascorbate-dependent oxidoreductase family. The cofactor is L-ascorbate. Fe(2+) serves as cofactor.

It catalyses the reaction jasmonate + 2-oxoglutarate + O2 = (1R,2R)-12-hydroxyjasmonate + succinate + CO2. 2-oxoglutarate-dependent dioxygenase involved in the oxidation of jasmonate (JA), a stress-induced phytohormone synthesized in response to attack by pathogens and herbivores, which triggers the activation of defense responses via the JA-mediated signaling pathway. Converts JA to 12-hydroxyjasmonate (12OH-JA), an inactive form of JA. Is specific to free JA, and cannot oxidize the bioactive form jasmonoyl-L-isoleucine (JA-Ile) or other JA-amino acid conjugates. Prevents over-accumulation of JA and indirectly its bioactive form JA-Ile under stress response. Acts as a negative regulator of JA-mediated defense signaling, by contributing to 12OH-JA accumulation, which represses JA defense responses upon infection by the fungal pathogen Botrytis cinerea. Acts as a negative regulator of JA-mediated defense responses upon infestation by the herbivorous caterpillar Mamestra brassicae. May be involved in the catabolism of cytotoxic polycyclic aromatic hydrocarbons (PAHs). This is Jasmonate-induced oxygenase 2 from Arabidopsis thaliana (Mouse-ear cress).